Reading from the N-terminus, the 100-residue chain is MAKVNIKPLEDKILVQANEAETTTASGLVIPDTAKEKPQEGTVVAVGPGRWDDDGAKRIPLDVSEGDTVIYSKYGGTEIKYNGEEYLILSARDVLAVVSK.

This sequence belongs to the GroES chaperonin family. Heptamer of 7 subunits arranged in a ring. Interacts with the chaperonin GroEL.

It is found in the cytoplasm. In terms of biological role, together with the chaperonin GroEL, plays an essential role in assisting protein folding. The GroEL-GroES system forms a nano-cage that allows encapsulation of the non-native substrate proteins and provides a physical environment optimized to promote and accelerate protein folding. GroES binds to the apical surface of the GroEL ring, thereby capping the opening of the GroEL channel. This chain is Co-chaperonin GroES, found in Mycolicibacterium paratuberculosis (strain ATCC BAA-968 / K-10) (Mycobacterium paratuberculosis).